A 603-amino-acid chain; its full sequence is UvrABC system protein C (603 aa).

A GIY-YIG domain is found at 13-92; it reads SSPGVYLMKD…IKQHHPKYNV (80 aa). The 36-residue stretch at 205-240 folds into the UVR domain; the sequence is EEVVKDLEKVIQKASDNLEFEQAANYYRTLSLIKQA.

Belongs to the UvrC family. Interacts with UvrB in an incision complex.

The protein localises to the cytoplasm. Its function is as follows. The UvrABC repair system catalyzes the recognition and processing of DNA lesions. UvrC both incises the 5' and 3' sides of the lesion. The N-terminal half is responsible for the 3' incision and the C-terminal half is responsible for the 5' incision. This Chlamydia pneumoniae (Chlamydophila pneumoniae) protein is UvrABC system protein C.